A 178-amino-acid polypeptide reads, in one-letter code: Disulfide bond formation protein B (178 aa).

The Cytoplasmic segment spans residues 1–14 (MLSFFKTLSTKRSA). The helical transmembrane segment at 15–31 (WFLLFSSALLLEAIALY) threads the bilayer. Topologically, residues 32 to 49 (FQHGMGLAPCVMCIYERV) are periplasmic. A disulfide bridge connects residues Cys-41 and Cys-44. Residues 50–65 (AILGIAFSGLLGLLYP) form a helical membrane-spanning segment. The Cytoplasmic segment spans residues 66–72 (SSMLLRL). The helical transmembrane segment at 73–90 (VALLIGLSSAIKGLMISI) threads the bilayer. Over 91–145 (THLDLQLYPAPWKQCSAVAEFPETLPLDQWFPALFLPSGSCSEVTWQFLGFSMVQ) the chain is Periplasmic. Cys-105 and Cys-131 are joined by a disulfide. The chain crosses the membrane as a helical span at residues 146–164 (WIVVIFALYTLLLALIFIS). Residues 165-177 (QVKRLKPKQRRLF) lie on the Cytoplasmic side of the membrane.

The protein belongs to the DsbB family.

The protein resides in the cell inner membrane. Functionally, required for disulfide bond formation in some periplasmic proteins. Acts by oxidizing the DsbA protein. The protein is Disulfide bond formation protein B of Pasteurella multocida (strain Pm70).